A 173-amino-acid polypeptide reads, in one-letter code: Cell division protein SepF (173 aa).

The interval 17–85 (SDDEYISDET…NELRTITTVH (69 aa)) is disordered. Low complexity predominate over residues 35 to 52 (SAGGSSAAVSESGSTSVA).

This sequence belongs to the SepF family. Homodimer. Interacts with FtsZ.

It localises to the cytoplasm. In terms of biological role, cell division protein that is part of the divisome complex and is recruited early to the Z-ring. Probably stimulates Z-ring formation, perhaps through the cross-linking of FtsZ protofilaments. Its function overlaps with FtsA. The chain is Cell division protein SepF from Kocuria rhizophila (strain ATCC 9341 / DSM 348 / NBRC 103217 / DC2201).